We begin with the raw amino-acid sequence, 265 residues long: Zwei Ig domain protein zig-1 (265 aa).

The signal sequence occupies residues methionine 1 to alanine 17. Over leucine 18–glutamine 232 the chain is Extracellular. Ig-like C2-type domains are found at residues histidine 41 to glycine 108 and proline 120 to valine 220. 2 N-linked (GlcNAc...) asparagine glycosylation sites follow: asparagine 83 and asparagine 193. Cysteine 155 and cysteine 202 form a disulfide bridge. A helical membrane pass occupies residues tryptophan 233 to phenylalanine 253. Topologically, residues cysteine 254 to alanine 265 are cytoplasmic.

Expressed in neurons and body wall muscles.

The protein localises to the cell membrane. Its function is as follows. Probably not involved in maintaining the position of ASI and ASH head neuron cell bodies and ventral nerve cord axons of PVQ, PVP, RMEV, AVK and HSN neurons. This chain is Zwei Ig domain protein zig-1, found in Caenorhabditis elegans.